A 409-amino-acid chain; its full sequence is Serine/threonine transporter SstT (409 aa).

A run of 9 helical transmembrane segments spans residues 24-44, 48-68, 82-102, 142-162, 194-214, 218-238, 292-312, 319-339, and 365-385; these read LALGIVIGSVSPQLGLAAGLF, FVGALKAVAPVLVFILVAATI, IIVLYLIGTFSAALTAVIAGM, AIANANYIGILAWALVLGAAL, LGIFGLVSSTIAETGFGALAG, LLAVLLGCMAFIALAVNPAIV, IPLGATVNMGGAAITITVLAM, GIQVDFATALLLSLVATVSAC, and VAMQVVAVGFIIGVIQDSAET.

The protein belongs to the dicarboxylate/amino acid:cation symporter (DAACS) (TC 2.A.23) family.

It is found in the cell inner membrane. It carries out the reaction L-serine(in) + Na(+)(in) = L-serine(out) + Na(+)(out). It catalyses the reaction L-threonine(in) + Na(+)(in) = L-threonine(out) + Na(+)(out). In terms of biological role, involved in the import of serine and threonine into the cell, with the concomitant import of sodium (symport system). This is Serine/threonine transporter SstT from Neisseria gonorrhoeae (strain NCCP11945).